The sequence spans 367 residues: tRNA 2-selenouridine synthase (367 aa).

One can recognise a Rhodanese domain in the interval 14–137 (FLNDVPLMDV…LRRFLIDSLE (124 aa)). C97 (S-selanylcysteine intermediate) is an active-site residue.

This sequence belongs to the SelU family. As to quaternary structure, monomer.

It catalyses the reaction 5-methylaminomethyl-2-thiouridine(34) in tRNA + selenophosphate + (2E)-geranyl diphosphate + H2O + H(+) = 5-methylaminomethyl-2-selenouridine(34) in tRNA + (2E)-thiogeraniol + phosphate + diphosphate. The enzyme catalyses 5-methylaminomethyl-2-thiouridine(34) in tRNA + (2E)-geranyl diphosphate = 5-methylaminomethyl-S-(2E)-geranyl-thiouridine(34) in tRNA + diphosphate. The catalysed reaction is 5-methylaminomethyl-S-(2E)-geranyl-thiouridine(34) in tRNA + selenophosphate + H(+) = 5-methylaminomethyl-2-(Se-phospho)selenouridine(34) in tRNA + (2E)-thiogeraniol. It carries out the reaction 5-methylaminomethyl-2-(Se-phospho)selenouridine(34) in tRNA + H2O = 5-methylaminomethyl-2-selenouridine(34) in tRNA + phosphate. Involved in the post-transcriptional modification of the uridine at the wobble position (U34) of tRNA(Lys), tRNA(Glu) and tRNA(Gln). Catalyzes the conversion of 2-thiouridine (S2U-RNA) to 2-selenouridine (Se2U-RNA). Acts in a two-step process involving geranylation of 2-thiouridine (S2U) to S-geranyl-2-thiouridine (geS2U) and subsequent selenation of the latter derivative to 2-selenouridine (Se2U) in the tRNA chain. The polypeptide is tRNA 2-selenouridine synthase (Marinobacter nauticus (strain ATCC 700491 / DSM 11845 / VT8) (Marinobacter aquaeolei)).